The chain runs to 326 residues: Phosphatidylinositol:ceramide inositolphosphotransferase (326 aa).

The next 6 helical transmembrane spans lie at 33-53 (LLLA…GVHY), 82-102 (SVFT…FIYH), 115-135 (VLAF…STQL), 169-189 (VLFG…LVFV), 199-219 (RLIK…IIAS), and 222-242 (HYSV…FFID). Residue histidine 181 is part of the active site. Catalysis depends on residues histidine 222 and aspartate 226. Residues 306-326 (MNGKHGEDINHTLSDATPNGT) are disordered. The segment covering 316–326 (HTLSDATPNGT) has biased composition (polar residues).

This sequence belongs to the sphingomyelin synthase family.

The protein resides in the golgi apparatus. It localises to the trans-Golgi network membrane. Its function is as follows. Catalyzes the transfer of the phosphorylinositol group from phosphatidylinositol (PI) to phytoceramide, an essential step in sphingolipid biosynthesis. May play an important role in modulating plant programmed cell death (PCD) associated with defense (e.g. toward Golovinomyces cichoracearum) by promoting sphingolipid metabolism and regulating ceramide accumulation. This Oryza sativa subsp. indica (Rice) protein is Phosphatidylinositol:ceramide inositolphosphotransferase (ERH1).